Reading from the N-terminus, the 165-residue chain is Large ribosomal subunit protein uL10 (165 aa).

The protein belongs to the universal ribosomal protein uL10 family. As to quaternary structure, part of the ribosomal stalk of the 50S ribosomal subunit. The N-terminus interacts with L11 and the large rRNA to form the base of the stalk. The C-terminus forms an elongated spine to which L12 dimers bind in a sequential fashion forming a multimeric L10(L12)X complex.

In terms of biological role, forms part of the ribosomal stalk, playing a central role in the interaction of the ribosome with GTP-bound translation factors. This is Large ribosomal subunit protein uL10 from Mycoplasma capricolum subsp. capricolum (strain California kid / ATCC 27343 / NCTC 10154).